Here is a 275-residue protein sequence, read N- to C-terminus: Proteasome subunit beta (275 aa).

The propeptide at 1–52 (MQDTTANQVAANATSSFTEHLQRNRPGLLPYNQPFPAALTGAGSQPLQVPHA) is removed in mature form; by autocatalysis. Catalysis depends on threonine 53, which acts as the Nucleophile.

The protein belongs to the peptidase T1B family. In terms of assembly, the 20S proteasome core is composed of 14 alpha and 14 beta subunits that assemble into four stacked heptameric rings, resulting in a barrel-shaped structure. The two inner rings, each composed of seven catalytic beta subunits, are sandwiched by two outer rings, each composed of seven alpha subunits. The catalytic chamber with the active sites is on the inside of the barrel. Has a gated structure, the ends of the cylinder being occluded by the N-termini of the alpha-subunits. Is capped by the proteasome-associated ATPase, ARC.

The protein localises to the cytoplasm. It catalyses the reaction Cleavage of peptide bonds with very broad specificity.. The protein operates within protein degradation; proteasomal Pup-dependent pathway. The formation of the proteasomal ATPase ARC-20S proteasome complex, likely via the docking of the C-termini of ARC into the intersubunit pockets in the alpha-rings, may trigger opening of the gate for substrate entry. Interconversion between the open-gate and close-gate conformations leads to a dynamic regulation of the 20S proteasome proteolysis activity. In terms of biological role, component of the proteasome core, a large protease complex with broad specificity involved in protein degradation. The chain is Proteasome subunit beta from Arthrobacter sp. (strain FB24).